The primary structure comprises 125 residues: Protein ApaG (125 aa).

Positions 1–125 (MIDSPRVCVQ…FRLAVPTFIH (125 aa)) constitute an ApaG domain.

The protein is Protein ApaG of Enterobacter sp. (strain 638).